The sequence spans 77 residues: Acyl carrier protein (77 aa).

Residues 1 to 76 (MSLEDDVKAI…DVIKYIQERQ (76 aa)) enclose the Carrier domain. Ser-36 bears the O-(pantetheine 4'-phosphoryl)serine mark.

It belongs to the acyl carrier protein (ACP) family. 4'-phosphopantetheine is transferred from CoA to a specific serine of apo-ACP by AcpS. This modification is essential for activity because fatty acids are bound in thioester linkage to the sulfhydryl of the prosthetic group.

The protein resides in the cytoplasm. It functions in the pathway lipid metabolism; fatty acid biosynthesis. Carrier of the growing fatty acid chain in fatty acid biosynthesis. In Chlamydia trachomatis serovar A (strain ATCC VR-571B / DSM 19440 / HAR-13), this protein is Acyl carrier protein.